Here is a 1216-residue protein sequence, read N- to C-terminus: ATP-dependent DNA helicase Q4 (1216 aa).

Disordered stretches follow at residues 72–100 and 113–171; these read EAQE…QSLL and NLKN…PRLG. 2 stretches are compositionally biased toward polar residues: residues 86–100 and 114–137; these read AATQ…QSLL and LKNT…SLST. A phosphoserine mark is found at Ser179 and Ser181. A disordered region spans residues 235–340; the sequence is SEVSVQSPEA…LHASPRPASL (106 aa). Composition is skewed to polar residues over residues 248-262 and 306-320; these read QPAQ…SINS and TQVN…SNQA. The segment at 393-410 adopts a CCHC-type zinc-finger fold; it reads DTCFRCGQFGHWASQCSQ. A disordered region spans residues 436 to 458; that stretch reads AQRTGTASCHHSGEETQPAAPEL. A Helicase ATP-binding domain is found at 506–684; that stretch reads IMRILSGIST…AQHLGIAGEF (179 aa). 519–526 contacts ATP; it reads LPTGAGKS. The DEAH box signature appears at 627-630; sequence DEVH. The Helicase C-terminal domain maps to 705–872; the sequence is DSDQALVTLL…AVKRLVQRVF (168 aa). Positions 875, 877, 906, and 909 each coordinate Zn(2+).

It belongs to the helicase family. RecQ subfamily. In terms of assembly, interacts with UBR1 and UBR2. Interacts with MCM10; this interaction regulates RECQL4 unwinding activity. Interacts with TOPBP1. The cofactor is Zn(2+).

Its subcellular location is the cytoplasm. It is found in the nucleus. It catalyses the reaction Couples ATP hydrolysis with the unwinding of duplex DNA by translocating in the 3'-5' direction.. The catalysed reaction is ATP + H2O = ADP + phosphate + H(+). In terms of biological role, an ATP-dependent DNA helicase which unwinds dsDNA with a 3'-overhang in a 3'-5' direction. May play a role in development of the palate and the limbs. May modulate chromosome segregation. The chain is ATP-dependent DNA helicase Q4 (Recql4) from Mus musculus (Mouse).